The chain runs to 1024 residues: Beta-galactosidase (1024 aa).

Residues Asn103 and Asp202 each contribute to the substrate site. Asp202 contributes to the Na(+) binding site. Positions 417, 419, and 462 each coordinate Mg(2+). Substrate contacts are provided by residues Glu462 and 538–541 (EYAH). Glu462 serves as the catalytic Proton donor. Glu538 (nucleophile) is an active-site residue. A Mg(2+)-binding site is contributed by Asn598. The Na(+) site is built by Phe602 and Asn605. Residues Asn605 and Trp1000 each contribute to the substrate site.

Belongs to the glycosyl hydrolase 2 family. Homotetramer. Requires Mg(2+) as cofactor. Na(+) is required as a cofactor.

It catalyses the reaction Hydrolysis of terminal non-reducing beta-D-galactose residues in beta-D-galactosides.. This chain is Beta-galactosidase, found in Escherichia coli O127:H6 (strain E2348/69 / EPEC).